The sequence spans 317 residues: Flagellar hook-associated protein 3 (317 aa).

This sequence belongs to the bacterial flagellin family.

The protein localises to the secreted. It is found in the bacterial flagellum. The protein is Flagellar hook-associated protein 3 (flgL) of Escherichia coli (strain K12).